A 704-amino-acid polypeptide reads, in one-letter code: Elongation factor G 2 (704 aa).

In terms of domain architecture, tr-type G spans 8–290 (ERYRNIGISA…AIIDYLPSPV (283 aa)). Residues 17-24 (AHIDAGKT), 88-92 (DTPGH), and 142-145 (NKMD) each bind GTP.

Belongs to the TRAFAC class translation factor GTPase superfamily. Classic translation factor GTPase family. EF-G/EF-2 subfamily.

It is found in the cytoplasm. In terms of biological role, catalyzes the GTP-dependent ribosomal translocation step during translation elongation. During this step, the ribosome changes from the pre-translocational (PRE) to the post-translocational (POST) state as the newly formed A-site-bound peptidyl-tRNA and P-site-bound deacylated tRNA move to the P and E sites, respectively. Catalyzes the coordinated movement of the two tRNA molecules, the mRNA and conformational changes in the ribosome. The sequence is that of Elongation factor G 2 from Polaromonas sp. (strain JS666 / ATCC BAA-500).